Here is a 102-residue protein sequence, read N- to C-terminus: Large ribosomal subunit protein bL21 (102 aa).

The protein belongs to the bacterial ribosomal protein bL21 family. In terms of assembly, part of the 50S ribosomal subunit. Contacts protein L20.

Its function is as follows. This protein binds to 23S rRNA in the presence of protein L20. In Lawsonia intracellularis, this protein is Large ribosomal subunit protein bL21.